A 276-amino-acid chain; its full sequence is Bis(5'-nucleosyl)-tetraphosphatase, symmetrical (276 aa).

Belongs to the Ap4A hydrolase family.

The catalysed reaction is P(1),P(4)-bis(5'-adenosyl) tetraphosphate + H2O = 2 ADP + 2 H(+). Functionally, hydrolyzes diadenosine 5',5'''-P1,P4-tetraphosphate to yield ADP. This chain is Bis(5'-nucleosyl)-tetraphosphatase, symmetrical, found in Legionella pneumophila (strain Lens).